The chain runs to 359 residues: uncharacterized protein (359 aa).

It belongs to the glycosyltransferase group 1 family. Glycosyltransferase 4 subfamily.

This is an uncharacterized protein from Bacillus subtilis (strain 168).